A 370-amino-acid polypeptide reads, in one-letter code: D-alanine--D-alanine ligase (370 aa).

One can recognise an ATP-grasp domain in the interval 144–352 (KKIFADAGIP…YGALIERLVD (209 aa)). Residue 177-232 (EEVLTYPVFVKPANLGSSVGISKATNKTELIEAMTEAFLYDRRVVVEQGVVAREIE) coordinates ATP. Residues Asp306, Glu319, and Asn321 each coordinate Mg(2+).

This sequence belongs to the D-alanine--D-alanine ligase family. Mg(2+) is required as a cofactor. Mn(2+) serves as cofactor.

It localises to the cytoplasm. The catalysed reaction is 2 D-alanine + ATP = D-alanyl-D-alanine + ADP + phosphate + H(+). Its pathway is cell wall biogenesis; peptidoglycan biosynthesis. Cell wall formation. In Listeria innocua serovar 6a (strain ATCC BAA-680 / CLIP 11262), this protein is D-alanine--D-alanine ligase.